A 186-amino-acid chain; its full sequence is CASP-like protein 4C2 (186 aa).

The Cytoplasmic segment spans residues 1–31 (MRSPQPHRSGGDTQQHFQSTVSVQKLKRFNS). A helical transmembrane segment spans residues 32–52 (LILVFRFAAFCFSLASAVFML). Residues 53-71 (TNSRGSDSLHWYNFDAFRY) are Extracellular-facing. The chain crosses the membrane as a helical span at residues 72 to 92 (VFAANAIVAIYSLFEMAASVW). Topologically, residues 93 to 103 (EISRNATLFPE) are cytoplasmic. Residues 104–124 (ICQVWFDFGHDQVFAYLLLSA) form a helical membrane-spanning segment. The Extracellular portion of the chain corresponds to 125–150 (NTAGTELARTLKDTCTDNKAFCVQSD). A helical transmembrane segment spans residues 151–171 (IAIVLGFAGFLFLGISSLFSG). At 172–186 (FRVVCFIINGSRFYV) the chain is on the cytoplasmic side.

This sequence belongs to the Casparian strip membrane proteins (CASP) family. Homodimer and heterodimers.

The protein resides in the cell membrane. The sequence is that of CASP-like protein 4C2 from Populus trichocarpa (Western balsam poplar).